We begin with the raw amino-acid sequence, 212 residues long: Ropporin-1B (212 aa).

The 38-residue stretch at 12–49 (PELPKMLKEFAKAAIRAQPQDLIQWGADYFEALSRGET) folds into the RIIa domain. Serine 56 bears the Phosphoserine mark. The interval 209-212 (VWLE) is interaction with RHPN1.

It belongs to the ropporin family. As to quaternary structure, homodimer. Interacts with RHPN1. May interact with SPA17. Interacts with AKAP3. Interacts with FSCB; the interaction increases upon spermatozoa capacitation conditions. Sumoylated, sumoylation decreases upon spermatozoa capacitation conditions.

The protein resides in the cell projection. Its subcellular location is the cilium. The protein localises to the flagellum. Functionally, important for male fertility. With ROPN1L, involved in fibrous sheath integrity and sperm motility, plays a role in PKA-dependent signaling processes required for spermatozoa capacitation. The chain is Ropporin-1B (ROPN1B) from Homo sapiens (Human).